Here is a 336-residue protein sequence, read N- to C-terminus: Alpha-N-acetylgalactosaminide alpha-2,6-sialyltransferase 5 (336 aa).

Residues 1–8 (MKTLMRHG) are Cytoplasmic-facing. A helical; Signal-anchor for type II membrane protein transmembrane segment spans residues 9 to 29 (LAVCLALTTMCTSLLLVYSSL). Topologically, residues 30–336 (GGQKERPPQQ…INHPENKPVF (307 aa)) are lumenal. Positions 32–81 (QKERPPQQQQQQQQQQQQASATGSSQPAAESSTQQRPGVPAGPRPLDGYL) are disordered. Low complexity predominate over residues 38-49 (QQQQQQQQQQQQ). Positions 50–67 (ASATGSSQPAAESSTQQR) are enriched in polar residues. Cys96 and Cys245 are disulfide-bonded. N-linked (GlcNAc...) asparagine glycans are attached at residues Asn137 and Asn161.

The protein belongs to the glycosyltransferase 29 family.

It is found in the golgi apparatus membrane. The enzyme catalyses a ganglioside GM1b (d18:1(4E)) + CMP-N-acetyl-beta-neuraminate = a ganglioside GD1alpha (d18:1(4E)) + CMP + H(+). It catalyses the reaction N-acetyl-alpha-neuraminosyl-(2-&gt;3)-beta-D-galactosyl-(1-&gt;3)-N-acetyl-beta-D-glucosaminyl-(1-&gt;3)-beta-D-galactosyl-(1-&gt;4)-beta-D-glucosyl-(1&lt;-&gt;1')-N-acyl-sphing-4-enine + CMP-N-acetyl-beta-neuraminate = N-acetyl-alpha-neuraminosyl-(2-&gt;3)-beta-D-galactosyl-(1-&gt;3)-[N-acetyl-alpha-neuraminosyl-(2-&gt;6)]-N-acetyl-beta-D-glucosaminyl-(1-&gt;3)-beta-D-galactosyl-(1-&gt;4)-beta-D-glucosyl-(1&lt;-&gt;1')-N-acyl-sphing-4-enine + CMP + H(+). It functions in the pathway glycolipid biosynthesis. Functionally, predominantly catalyzes the biosynthesis of ganglioside GD1alpha from GM1b in the brain, by transferring the sialyl group (N-acetyl-alpha-neuraminyl or NeuAc) from CMP-NeuAc to the GalNAc residue on the NeuAc-alpha-2,3-Gal-beta-1,3-GalNAc sequence of GM1b. GD1alpha is a critical molecule in the communication and interaction between neuronal cells and their supportive cells, particularly in brain tissues, and functions as an adhesion molecule in the process of metastasis. Also shows activity towards sialyl Lc4Cer (N-acetyl-alpha-neuraminosyl-(2-&gt;3)-beta-D-galactosyl-(1-&gt;3)-N-acetyl-beta-D-glucosaminyl-(1-&gt;3)-beta-D-galactosyl-(1-&gt;4)-beta-D-glucosyl-(1&lt;-&gt;1')-N-acyl-sphing-4-enine) generating disialyl Lc4Cer, which can lead to the synthesis of disialyl Lewis a (Le(a)), suggested to be a cancer-associated antigen. The polypeptide is Alpha-N-acetylgalactosaminide alpha-2,6-sialyltransferase 5 (ST6GALNAC5) (Homo sapiens (Human)).